The primary structure comprises 254 residues: Gamma-glutamyl-gamma-aminobutyrate hydrolase PuuD (254 aa).

Residues 16 to 250 (RNRLKGHATQ…ITACQHHIAE (235 aa)) form the Glutamine amidotransferase type-1 domain. Cys-114 acts as the Nucleophile in catalysis. Residues His-222 and Glu-224 contribute to the active site.

Belongs to the peptidase C26 family. In terms of assembly, homodimer.

It catalyses the reaction 4-(gamma-L-glutamylamino)butanoate + H2O = 4-aminobutanoate + L-glutamate. The protein operates within amine and polyamine degradation; putrescine degradation; 4-aminobutanoate from putrescine: step 4/4. In terms of biological role, involved in the breakdown of putrescine via hydrolysis of the gamma-glutamyl linkage of gamma-glutamyl-gamma-aminobutyrate. This is Gamma-glutamyl-gamma-aminobutyrate hydrolase PuuD (puuD) from Escherichia coli (strain K12).